Reading from the N-terminus, the 187-residue chain is ATP synthase subunit delta, chloroplastic (187 aa).

This sequence belongs to the ATPase delta chain family. In terms of assembly, F-type ATPases have 2 components, F(1) - the catalytic core - and F(0) - the membrane proton channel. F(1) has five subunits: alpha(3), beta(3), gamma(1), delta(1), epsilon(1). CF(0) has four main subunits: a(1), b(1), b'(1) and c(10-14). The alpha and beta chains form an alternating ring which encloses part of the gamma chain. F(1) is attached to F(0) by a central stalk formed by the gamma and epsilon chains, while a peripheral stalk is formed by the delta, b and b' chains.

The protein resides in the plastid. The protein localises to the chloroplast thylakoid membrane. In terms of biological role, f(1)F(0) ATP synthase produces ATP from ADP in the presence of a proton or sodium gradient. F-type ATPases consist of two structural domains, F(1) containing the extramembraneous catalytic core and F(0) containing the membrane proton channel, linked together by a central stalk and a peripheral stalk. During catalysis, ATP synthesis in the catalytic domain of F(1) is coupled via a rotary mechanism of the central stalk subunits to proton translocation. This protein is part of the stalk that links CF(0) to CF(1). It either transmits conformational changes from CF(0) to CF(1) or is implicated in proton conduction. This Trieres chinensis (Marine centric diatom) protein is ATP synthase subunit delta, chloroplastic.